We begin with the raw amino-acid sequence, 207 residues long: Carbonic anhydrase 2 (207 aa).

Zn(2+) contacts are provided by C51, D53, H104, and C107.

Belongs to the beta-class carbonic anhydrase family. Requires Zn(2+) as cofactor.

The catalysed reaction is hydrogencarbonate + H(+) = CO2 + H2O. Functionally, catalyzes the reversible hydration of carbon dioxide to form bicarbonate. The polypeptide is Carbonic anhydrase 2 (mtcA2) (Mycobacterium tuberculosis (strain CDC 1551 / Oshkosh)).